The chain runs to 362 residues: UDP-N-acetylglucosamine--N-acetylmuramyl-(pentapeptide) pyrophosphoryl-undecaprenol N-acetylglucosamine transferase (362 aa).

UDP-N-acetyl-alpha-D-glucosamine is bound by residues 15–17, N127, R165, S191, I247, 266–271, and Q292; these read TGG and ALTVSE.

It belongs to the glycosyltransferase 28 family. MurG subfamily.

Its subcellular location is the cell inner membrane. It carries out the reaction di-trans,octa-cis-undecaprenyl diphospho-N-acetyl-alpha-D-muramoyl-L-alanyl-D-glutamyl-meso-2,6-diaminopimeloyl-D-alanyl-D-alanine + UDP-N-acetyl-alpha-D-glucosamine = di-trans,octa-cis-undecaprenyl diphospho-[N-acetyl-alpha-D-glucosaminyl-(1-&gt;4)]-N-acetyl-alpha-D-muramoyl-L-alanyl-D-glutamyl-meso-2,6-diaminopimeloyl-D-alanyl-D-alanine + UDP + H(+). It functions in the pathway cell wall biogenesis; peptidoglycan biosynthesis. In terms of biological role, cell wall formation. Catalyzes the transfer of a GlcNAc subunit on undecaprenyl-pyrophosphoryl-MurNAc-pentapeptide (lipid intermediate I) to form undecaprenyl-pyrophosphoryl-MurNAc-(pentapeptide)GlcNAc (lipid intermediate II). This is UDP-N-acetylglucosamine--N-acetylmuramyl-(pentapeptide) pyrophosphoryl-undecaprenol N-acetylglucosamine transferase from Shewanella baltica (strain OS223).